The following is a 282-amino-acid chain: Chorismate dehydratase (282 aa).

This sequence belongs to the MqnA/MqnD family. MqnA subfamily.

The enzyme catalyses chorismate = 3-[(1-carboxyvinyl)-oxy]benzoate + H2O. The protein operates within quinol/quinone metabolism; menaquinone biosynthesis. Its function is as follows. Catalyzes the dehydration of chorismate into 3-[(1-carboxyvinyl)oxy]benzoate, a step in the biosynthesis of menaquinone (MK, vitamin K2). This chain is Chorismate dehydratase, found in Streptomyces coelicolor (strain ATCC BAA-471 / A3(2) / M145).